Reading from the N-terminus, the 240-residue chain is Dihydromonapterin reductase (240 aa).

Catalysis depends on tyrosine 152, which acts as the Proton acceptor.

It belongs to the short-chain dehydrogenases/reductases (SDR) family. FolM subfamily.

It catalyses the reaction (6S)-5,6,7,8-tetrahydrofolate + NADP(+) = 7,8-dihydrofolate + NADPH + H(+). The catalysed reaction is 7,8-dihydromonapterin + NADPH + H(+) = 5,6,7,8-tetrahydromonapterin + NADP(+). Functionally, catalyzes the reduction of dihydromonapterin to tetrahydromonapterin. Also has lower activity with dihydrofolate. The polypeptide is Dihydromonapterin reductase (folM) (Escherichia coli O139:H28 (strain E24377A / ETEC)).